The chain runs to 206 residues: FMN-dependent NADH:quinone oxidoreductase (206 aa).

FMN is bound by residues Ser9, 15–17 (SVS), 95–98 (MYNF), and 139–142 (SRGG).

It belongs to the azoreductase type 1 family. As to quaternary structure, homodimer. FMN is required as a cofactor.

The enzyme catalyses 2 a quinone + NADH + H(+) = 2 a 1,4-benzosemiquinone + NAD(+). It carries out the reaction N,N-dimethyl-1,4-phenylenediamine + anthranilate + 2 NAD(+) = 2-(4-dimethylaminophenyl)diazenylbenzoate + 2 NADH + 2 H(+). Its function is as follows. Quinone reductase that provides resistance to thiol-specific stress caused by electrophilic quinones. Also exhibits azoreductase activity. Catalyzes the reductive cleavage of the azo bond in aromatic azo compounds to the corresponding amines. In Legionella pneumophila subsp. pneumophila (strain Philadelphia 1 / ATCC 33152 / DSM 7513), this protein is FMN-dependent NADH:quinone oxidoreductase.